Reading from the N-terminus, the 241-residue chain is Large ribosomal subunit protein uL2 (241 aa).

A disordered region spans residues 201–241 (VDHPHGGGNRQHPGRPTTVSRHAPPGRKVGSIAAKRTGLKR).

Belongs to the universal ribosomal protein uL2 family. In terms of assembly, part of the 50S ribosomal subunit. Forms a bridge to the 30S subunit in the 70S ribosome.

In terms of biological role, one of the primary rRNA binding proteins. Required for association of the 30S and 50S subunits to form the 70S ribosome, for tRNA binding and peptide bond formation. It has been suggested to have peptidyltransferase activity; this is somewhat controversial. Makes several contacts with the 16S rRNA in the 70S ribosome. This chain is Large ribosomal subunit protein uL2, found in Methanobrevibacter smithii (strain ATCC 35061 / DSM 861 / OCM 144 / PS).